We begin with the raw amino-acid sequence, 505 residues long: NADH-quinone oxidoreductase subunit N (505 aa).

The next 14 helical transmembrane spans lie at 20-40 (ALAPELVLLVTAVCLMLGDLF), 59-79 (ALALTLSMNFSGGATAFGGVF), 83-103 (GLAAAFKVVCLAALGLTALMS), 115-135 (GEYYSLMAFSTLGMCVMVSAG), 137-157 (AIVLYLGLELMALPIYALVAL), 172-192 (FLMGSFASALLLFGLSILYGL), 220-240 (AVVALGLVLAGLGFKVATVPF), 251-271 (APTTVTAFMSVAAKTASFAVL), 285-305 (LWSDALAGLAVLTMLLGNIAA), 314-334 (MLAYSAIAHAGYALLGLAACT), 342-362 (AAYLTIYLCMNIGAFAVIIYL), 394-414 (LAAVMLVFLFSLTGIPPTAGF), 431-451 (ITVVVAVVCSTISAWYYLGVA), and 481-501 (AVCLAGAVLWGIFPQSLLFWI).

It belongs to the complex I subunit 2 family. In terms of assembly, NDH-1 is composed of 14 different subunits. Subunits NuoA, H, J, K, L, M, N constitute the membrane sector of the complex.

The protein resides in the cell inner membrane. The enzyme catalyses a quinone + NADH + 5 H(+)(in) = a quinol + NAD(+) + 4 H(+)(out). Its function is as follows. NDH-1 shuttles electrons from NADH, via FMN and iron-sulfur (Fe-S) centers, to quinones in the respiratory chain. The immediate electron acceptor for the enzyme in this species is believed to be ubiquinone. Couples the redox reaction to proton translocation (for every two electrons transferred, four hydrogen ions are translocated across the cytoplasmic membrane), and thus conserves the redox energy in a proton gradient. The polypeptide is NADH-quinone oxidoreductase subunit N (Desulfovibrio desulfuricans (strain ATCC 27774 / DSM 6949 / MB)).